The sequence spans 156 residues: Phosphopantetheine adenylyltransferase (156 aa).

T10 provides a ligand contact to substrate. ATP contacts are provided by residues 10–11 and H18; that span reads TF. Residues K42, L74, and R88 each coordinate substrate. ATP contacts are provided by residues 89 to 91, E99, and 124 to 130; these read GIR and WAFISSS.

The protein belongs to the bacterial CoaD family. Homohexamer. The cofactor is Mg(2+).

It localises to the cytoplasm. It catalyses the reaction (R)-4'-phosphopantetheine + ATP + H(+) = 3'-dephospho-CoA + diphosphate. It participates in cofactor biosynthesis; coenzyme A biosynthesis; CoA from (R)-pantothenate: step 4/5. Functionally, reversibly transfers an adenylyl group from ATP to 4'-phosphopantetheine, yielding dephospho-CoA (dPCoA) and pyrophosphate. This Hamiltonella defensa subsp. Acyrthosiphon pisum (strain 5AT) protein is Phosphopantetheine adenylyltransferase.